We begin with the raw amino-acid sequence, 429 residues long: Ribosomal RNA small subunit methyltransferase B (429 aa).

S-adenosyl-L-methionine-binding positions include cysteine 254–lysine 260, aspartate 277, aspartate 303, and aspartate 322. The Nucleophile role is filled by cysteine 375. A disordered region spans residues alanine 397 to aspartate 419. A compositionally biased stretch (polar residues) spans glutamate 400–leucine 412.

This sequence belongs to the class I-like SAM-binding methyltransferase superfamily. RsmB/NOP family.

The protein resides in the cytoplasm. It carries out the reaction cytidine(967) in 16S rRNA + S-adenosyl-L-methionine = 5-methylcytidine(967) in 16S rRNA + S-adenosyl-L-homocysteine + H(+). Functionally, specifically methylates the cytosine at position 967 (m5C967) of 16S rRNA. The polypeptide is Ribosomal RNA small subunit methyltransferase B (Salmonella choleraesuis (strain SC-B67)).